A 1960-amino-acid polypeptide reads, in one-letter code: Exophilin-5 (1960 aa).

In terms of domain architecture, RabBD spans 7–63 (GFDFSFLNEEEARKILQVLERNEELRRAEKDRISKLQKTKRDIRWLQGATGEWFEEI). 3 stretches are compositionally biased toward polar residues: residues 325–334 (ASPATGSFTA), 342–366 (DTQN…LSSI), and 635–645 (SQSSSFPDSTA). 5 disordered regions span residues 325–366 (ASPA…LSSI), 616–645 (TPAS…DSTA), 672–720 (HSTD…TGLP), 734–835 (DFQN…SSNT), and 910–976 (FSRS…KGRV). The span at 673-682 (STDSLSLTDT) shows a compositional bias: low complexity. Positions 692 to 707 (NSEKDMDVSVSKDEQL) are enriched in basic and acidic residues. Phosphoserine is present on residues Ser799 and Ser802. Composition is skewed to polar residues over residues 808–835 (ESGT…SSNT) and 910–920 (FSRSLSDQDPG). The segment covering 921–932 (QEQREEKDKATK) has biased composition (basic and acidic residues). The span at 933-945 (SQDNQLAVNSTDN) shows a compositional bias: polar residues. Ser1027 is modified (phosphoserine). A disordered region spans residues 1035 to 1095 (QESKGTVASV…PKATKKMTDM (61 aa)). A compositionally biased stretch (polar residues) spans 1062-1074 (GKSTSDKPSSPES). 2 positions are modified to phosphoserine: Ser1083 and Ser1117. 3 disordered regions span residues 1291–1375 (AQVQ…LSRE), 1389–1493 (PLLH…DSES), and 1510–1759 (EAQP…EPHL). The span at 1318–1336 (PESKDVSQLPDRETSKSTL) shows a compositional bias: basic and acidic residues. A compositionally biased stretch (polar residues) spans 1356–1365 (KEISPSNVSK). Residues 1392-1403 (HQEKGAGKEHTK) show a composition bias toward basic and acidic residues. 2 stretches are compositionally biased toward polar residues: residues 1470-1493 (RETS…DSES) and 1520-1533 (SEAS…TNTA). Ser1493 carries the post-translational modification Phosphoserine. Composition is skewed to basic and acidic residues over residues 1534–1546 (EMRK…HMLT) and 1561–1571 (TNTDETKDRYS). The segment covering 1572–1586 (GKHRLAAISKASKRI) has biased composition (basic residues). Positions 1637 to 1657 (ESSQMNVDKSETLLQETTVSS) are enriched in polar residues. Residues Ser1724, Ser1739, Ser1789, and Ser1819 each carry the phosphoserine modification. Polar residues predominate over residues 1732–1741 (TQKSTINSHC). 2 disordered regions span residues 1828 to 1847 (ESES…STSS) and 1906 to 1960 (VNSP…ESEL). Positions 1939 to 1950 (WDTDTTTDDEYY) are enriched in acidic residues. Residues 1951-1960 (LDEKDKESEL) show a composition bias toward basic and acidic residues.

In terms of assembly, interacts with RAB27A.

May act as Rab effector protein and play a role in vesicle trafficking. In Mus musculus (Mouse), this protein is Exophilin-5.